We begin with the raw amino-acid sequence, 1217 residues long: Genetic suppressor element 1 (1217 aa).

The tract at residues 1-155 (MKGMSHEPKS…SRSSSGGRER (155 aa)) is disordered. At S10 the chain carries Phosphoserine. The segment covering 15 to 33 (MLSTATRTTATVNPLTPSP) has biased composition (polar residues). Composition is skewed to low complexity over residues 43-63 (SPATSSALSAQAAPSSSFAAA) and 76-89 (GSSLSSESSPVSSP). Residues S84 and S95 each carry the phosphoserine modification. Over residues 103 to 114 (VPMGPIIVPPGG) the composition is skewed to low complexity. Asymmetric dimethylarginine is present on R305. Residues 321–403 (ERMSGLSAER…REKELLAAKA (83 aa)) adopt a coiled-coil conformation. Disordered regions lie at residues 324-385 (SGLS…EREL) and 418-465 (RGHA…HHTV). The segment covering 331-385 (LQMDEELRREREREREREREREADREREKEREREREKEREQEKEREREKEREREL) has biased composition (basic and acidic residues). Residue T433 is modified to Phosphothreonine. Residues 450–465 (PVQHPLHPVPTPHHTV) show a composition bias toward low complexity. K496 is modified (N6-acetyllysine). 3 disordered regions span residues 526-579 (HLDM…QLHA), 633-675 (KAEE…GPFL), and 699-720 (FGELSGPLKPGSPYRPPVPRAP). Basic and acidic residues-rich tracts occupy residues 551–561 (NRHEPGGRDPP) and 633–645 (KAEEGPRKREPAP). Pro residues predominate over residues 711 to 720 (PYRPPVPRAP). Residue K739 is modified to N6-acetyllysine. Residue S766 is modified to Phosphoserine. Disordered regions lie at residues 807-858 (KEEL…NNSP), 903-930 (ADSLTNSPRDSPAVSLSEPATQQASLDV), 948-981 (EPGKLEQVRPQELSRVQELAPASGEKARLSEAPG), and 1068-1122 (LQSS…PKRK). Basic residues predominate over residues 813 to 822 (QKRRKRRRML). Phosphoserine occurs at positions 826 and 828. Composition is skewed to polar residues over residues 831-840 (TIQSKRQTPS) and 847-858 (TRYSPDEMNNSP). S857 carries the phosphoserine modification. Residue T907 is modified to Phosphothreonine. S909 bears the Phosphoserine mark. The segment covering 1068–1085 (LQSSSRAPPPQHNGQQEP) has biased composition (polar residues). Residues 1099–1117 (RDSEEEEEEDDEDGEDEEE) show a composition bias toward acidic residues. The residue at position 1101 (S1101) is a Phosphoserine. The stretch at 1127 to 1201 (EAVFEAYQEH…ELDHLRKCLA (75 aa)) forms a coiled coil.

As to quaternary structure, may be a component of a BHC histone deacetylase complex that contains HDAC1, HDAC2, HMG20B/BRAF35, KDM1A, RCOR1/CoREST, PHF21A/BHC80, ZMYM2, ZNF217, ZMYM3, GSE1 and GTF2I.

This chain is Genetic suppressor element 1 (GSE1), found in Homo sapiens (Human).